Consider the following 305-residue polypeptide: 4-diphosphocytidyl-2-C-methyl-D-erythritol kinase (305 aa).

Lys10 is a catalytic residue. Position 95-105 (95-105 (PVTAGLGGGSS)) interacts with ATP. Asp136 is a catalytic residue. Residues 286 to 305 (PGVTPWRSPRSASSPSTKRS) form a disordered region. Over residues 290 to 305 (PWRSPRSASSPSTKRS) the composition is skewed to low complexity.

This sequence belongs to the GHMP kinase family. IspE subfamily.

The enzyme catalyses 4-CDP-2-C-methyl-D-erythritol + ATP = 4-CDP-2-C-methyl-D-erythritol 2-phosphate + ADP + H(+). The protein operates within isoprenoid biosynthesis; isopentenyl diphosphate biosynthesis via DXP pathway; isopentenyl diphosphate from 1-deoxy-D-xylulose 5-phosphate: step 3/6. Catalyzes the phosphorylation of the position 2 hydroxy group of 4-diphosphocytidyl-2C-methyl-D-erythritol. The chain is 4-diphosphocytidyl-2-C-methyl-D-erythritol kinase from Anaeromyxobacter sp. (strain Fw109-5).